The following is a 290-amino-acid chain: 4-diphosphocytidyl-2-C-methyl-D-erythritol kinase (290 aa).

Lysine 11 is a catalytic residue. 97–107 (PVAAGIGGGSS) provides a ligand contact to ATP. Residue aspartate 139 is part of the active site.

The protein belongs to the GHMP kinase family. IspE subfamily.

The enzyme catalyses 4-CDP-2-C-methyl-D-erythritol + ATP = 4-CDP-2-C-methyl-D-erythritol 2-phosphate + ADP + H(+). The protein operates within isoprenoid biosynthesis; isopentenyl diphosphate biosynthesis via DXP pathway; isopentenyl diphosphate from 1-deoxy-D-xylulose 5-phosphate: step 3/6. Its function is as follows. Catalyzes the phosphorylation of the position 2 hydroxy group of 4-diphosphocytidyl-2C-methyl-D-erythritol. This is 4-diphosphocytidyl-2-C-methyl-D-erythritol kinase from Methylobacterium radiotolerans (strain ATCC 27329 / DSM 1819 / JCM 2831 / NBRC 15690 / NCIMB 10815 / 0-1).